We begin with the raw amino-acid sequence, 446 residues long: ATP-dependent protease ATPase subunit HslU (446 aa).

ATP is bound by residues Val18, 60–65 (GVGKTE), Asp259, Glu324, and Arg396.

This sequence belongs to the ClpX chaperone family. HslU subfamily. A double ring-shaped homohexamer of HslV is capped on each side by a ring-shaped HslU homohexamer. The assembly of the HslU/HslV complex is dependent on binding of ATP.

It localises to the cytoplasm. ATPase subunit of a proteasome-like degradation complex; this subunit has chaperone activity. The binding of ATP and its subsequent hydrolysis by HslU are essential for unfolding of protein substrates subsequently hydrolyzed by HslV. HslU recognizes the N-terminal part of its protein substrates and unfolds these before they are guided to HslV for hydrolysis. This is ATP-dependent protease ATPase subunit HslU from Acidovorax sp. (strain JS42).